A 455-amino-acid chain; its full sequence is Succinyl-CoA--L-malate CoA-transferase alpha subunit (455 aa).

The disordered stretch occupies residues 1–58; sequence MAKASRLTRSTGQPTEVSEGQVTGTSEMPPTGEEPSGHAESKPPASDPMSTPGTGQEQ. Composition is skewed to polar residues over residues 7–28 and 48–58; these read LTRS…TSEM and PMSTPGTGQEQ. The active-site Nucleophile is the aspartate 227.

This sequence belongs to the CoA-transferase III family. As to quaternary structure, forms a large complex composed of six heterodimers (alpha, beta).

It carries out the reaction succinyl-CoA + (S)-malate = (S)-malyl-CoA + succinate. The enzyme catalyses (3S)-citramalate + succinyl-CoA = (3S)-citramalyl-CoA + succinate. In terms of biological role, involved in the 3-hydroxypropionate cycle used for autotrophic carbon dioxide fixation. Catalyzes the transfer of CoA moiety from succinyl-CoA to L-malate to yield L-malyl-CoA. The polypeptide is Succinyl-CoA--L-malate CoA-transferase alpha subunit (smtA) (Chloroflexus aurantiacus (strain ATCC 29366 / DSM 635 / J-10-fl)).